Reading from the N-terminus, the 76-residue chain is MSKRPTIDTTHIMRRAEELISASSNRYRITVQVANRAKKRRRRENLEDFEDAGMKSVMQAIIEMSDELTQPEIIGE.

It belongs to the RNA polymerase subunit omega family. In cyanobacteria the RNAP catalytic core is composed of 2 alpha, 1 beta, 1 beta', 1 gamma and 1 omega subunit. When a sigma factor is associated with the core the holoenzyme is formed, which can initiate transcription.

The enzyme catalyses RNA(n) + a ribonucleoside 5'-triphosphate = RNA(n+1) + diphosphate. Its function is as follows. Promotes RNA polymerase assembly. Latches the N- and C-terminal regions of the beta' subunit thereby facilitating its interaction with the beta and alpha subunits. The polypeptide is DNA-directed RNA polymerase subunit omega (Acaryochloris marina (strain MBIC 11017)).